The chain runs to 443 residues: L-seryl-tRNA(Sec) selenium transferase (443 aa).

Lys285 carries the N6-(pyridoxal phosphate)lysine modification.

It belongs to the SelA family. Pyridoxal 5'-phosphate is required as a cofactor.

The protein localises to the cytoplasm. The catalysed reaction is L-seryl-tRNA(Sec) + selenophosphate + H(+) = L-selenocysteinyl-tRNA(Sec) + phosphate. It participates in aminoacyl-tRNA biosynthesis; selenocysteinyl-tRNA(Sec) biosynthesis; selenocysteinyl-tRNA(Sec) from L-seryl-tRNA(Sec) (bacterial route): step 1/1. Its function is as follows. Converts seryl-tRNA(Sec) to selenocysteinyl-tRNA(Sec) required for selenoprotein biosynthesis. This Campylobacter lari (strain RM2100 / D67 / ATCC BAA-1060) protein is L-seryl-tRNA(Sec) selenium transferase.